The following is a 281-amino-acid chain: Arabinose operon regulatory protein (281 aa).

5 residues coordinate alpha-L-arabinopyanose: P8, T24, R38, Y82, and H93. The HTH araC/xylS-type domain occupies R180–G279. 2 DNA-binding regions (H-T-H motif) span residues A198 to L219 and I246 to T269.

Homodimer.

It is found in the cytoplasm. Functionally, transcription factor that regulates the expression of several genes involved in the transport and metabolism of L-arabinose. This chain is Arabinose operon regulatory protein, found in Salmonella typhimurium (strain LT2 / SGSC1412 / ATCC 700720).